The sequence spans 383 residues: MDKLKIAEWGEKLKTGGAQMSRMVSEKVKDMLQAPTLESKMVDEATLETLEEPNWGMNMRICAQINNDEFNGTEIVRAIKRKISGKSPVSQRLSLELLEACAMNCEKVFSEVASEKVLDEMVWLIKNGEADSENRKRAFQLIRAWGQSQDLTYLPVFHQTYMSLEGENGLHARGEENSMPGQSSLESLMQRPVPVPPPGSYPVPNQEQALGDDDGLDYNFGNLSIKDKKEQIEITRNSLELLSSMLNTEGKPNHTEDDLTVSLMEKCKQSQPLIQMIIESTTDDEGVLFEALHLNDELQQVLSSYKKPDETEKKASIVEQESSGSKDTGPKPTEQEEQEPVKKTGADDDKKHSEASGSSNKTVKEEKQAVKIELGLSSDEDEK.

Positions 45–178 constitute a VHS domain; sequence ATLETLEEPN…GLHARGEENS (134 aa). One can recognise a GAT domain in the interval 223–310; that stretch reads LSIKDKKEQI…VLSSYKKPDE (88 aa). A disordered region spans residues 305–383; the sequence is YKKPDETEKK…LGLSSDEDEK (79 aa). Composition is skewed to basic and acidic residues over residues 306–316 and 339–354; these read KKPDETEKKAS and EPVK…KHSE. A phosphoserine mark is found at S377 and S378.

It belongs to the TOM1 family. Ubiquitously expressed.

It localises to the cytoplasm. The protein localises to the membrane. Binds ubiquitin in vitro. Might contribute to the loading of the ESCRT machinery. In Arabidopsis thaliana (Mouse-ear cress), this protein is TOM1-like protein 2.